The following is a 326-amino-acid chain: tRNA-modifying protein YgfZ (326 aa).

Trp-27 and Trp-189 together coordinate folate.

Belongs to the tRNA-modifying YgfZ family.

Its subcellular location is the cytoplasm. Folate-binding protein involved in regulating the level of ATP-DnaA and in the modification of some tRNAs. It is probably a key factor in regulatory networks that act via tRNA modification, such as initiation of chromosomal replication. The polypeptide is tRNA-modifying protein YgfZ (Escherichia coli O7:K1 (strain IAI39 / ExPEC)).